The sequence spans 227 residues: MRHEAPMQMASAQDARYGQKDSSDQNFDYMFKLLIIGNSSVGKTSFLFRYADDSFTSAFVSTVGIDFKVKTVFKNEKRIKLQIWDTAGQERYRTITTAYYRGAMGFILMYDITNEESFNAVQDWSTQIKTYSWDNAQVILVGNKCDMEDERVISTERGQHLGEQLGFEFFETSAKDNINVKQTFERLVDIICDKMSESLETDPAITAAKQNTRLKETPPPPQPNCGC.

Residues Ser-39, Gly-42, Lys-43, Thr-44, Ser-45, Thr-56, Ser-57, Ser-61, and Thr-62 each contribute to the GTP site. Thr-44 contributes to the Mg(2+) binding site. The Switch 1 signature appears at 53 to 66 (DSFTSAFVSTVGID). Mg(2+) contacts are provided by Thr-62 and Asp-85. Thr-86 carries the phosphothreonine modification. The Switch 2 motif lies at 86 to 104 (TAGQERYRTITTAYYRGAM). Residues Gly-88, Asn-143, Lys-144, Asp-146, Ala-174, and Lys-175 each coordinate GTP. Phosphoserine occurs at positions 196 and 198. At Thr-206 the chain carries Phosphothreonine. 2 S-geranylgeranyl cysteine lipidation sites follow: Cys-225 and Cys-227. Cysteine methyl ester is present on Cys-227.

It belongs to the small GTPase superfamily. Rab family. Interacts with RIMS1, RIMS2, RPH3A and RPH3AL. The GTP-bound form interacts with REP15. Interacts with GDI2, CHM and CHML; phosphorylation at Thr-86 disrupts these interactions. Interacts with MADD (via uDENN domain); the GTP-bound form is preferred for interaction. Mg(2+) is required as a cofactor. In terms of processing, phosphorylation of Thr-86 in the switch II region by LRRK2 prevents the association of RAB regulatory proteins, including CHM, CHML and RAB GDP dissociation inhibitor GDI2.

It localises to the cell membrane. It catalyses the reaction GTP + H2O = GDP + phosphate + H(+). With respect to regulation, regulated by guanine nucleotide exchange factors (GEFs) which promote the exchange of bound GDP for free GTP. Regulated by GTPase activating proteins (GAPs) which increase the GTP hydrolysis activity. Inhibited by GDP dissociation inhibitors (GDIs) which prevent Rab-GDP dissociation. The small GTPases Rab are key regulators of intracellular membrane trafficking, from the formation of transport vesicles to their fusion with membranes. Rabs cycle between an inactive GDP-bound form and an active GTP-bound form that is able to recruit to membranes different sets of downstream effectors directly responsible for vesicle formation, movement, tethering and fusion. The chain is Ras-related protein Rab-3C (RAB3C) from Bos taurus (Bovine).